Reading from the N-terminus, the 291-residue chain is 33 kDa chaperonin (291 aa).

2 disulfides stabilise this stretch: Cys237–Cys239 and Cys270–Cys273.

It belongs to the HSP33 family. In terms of processing, under oxidizing conditions two disulfide bonds are formed involving the reactive cysteines. Under reducing conditions zinc is bound to the reactive cysteines and the protein is inactive.

The protein resides in the cytoplasm. In terms of biological role, redox regulated molecular chaperone. Protects both thermally unfolding and oxidatively damaged proteins from irreversible aggregation. Plays an important role in the bacterial defense system toward oxidative stress. This Clostridioides difficile (strain 630) (Peptoclostridium difficile) protein is 33 kDa chaperonin.